Reading from the N-terminus, the 449-residue chain is Trigger factor (449 aa).

The region spanning 173–258 (GDRVTVDFVG…LKKVEWPHLP (86 aa)) is the PPIase FKBP-type domain.

The protein belongs to the FKBP-type PPIase family. Tig subfamily.

It localises to the cytoplasm. It catalyses the reaction [protein]-peptidylproline (omega=180) = [protein]-peptidylproline (omega=0). Functionally, involved in protein export. Acts as a chaperone by maintaining the newly synthesized protein in an open conformation. Functions as a peptidyl-prolyl cis-trans isomerase. This Burkholderia mallei (strain NCTC 10229) protein is Trigger factor.